The sequence spans 640 residues: MAETLITKPPLSLSFTSLSSMLPSLSLSTANRHLSVTDTIPLPNSNSNATPPLRIAIIGFGNYGQFLAETLISQGHILFAHSRSDHSSAARRLGVSYFTDLHDLCERHPDVVLLCTSILSIENILKTLPFQRLRRNTLFVDVLSVKEFAKTLLLQYLPEDFDILCTHPMFGPQSVSSNHGWRGLRFVYDKVRIGEERLRVSRCESFLEIFVREGCEMVEMSVTDHDKFAAESQFITHTLGRLLGMLKLISTPINTKGYEALLDLAENICGDSFDLYYGLFVYNNNSLEVLERIDLAFEALRKELFSRLHGVVRKQSFEGEAKKVHVFPNCGENDASLDMMRSEDVVVKYEYNSQVSGSVNDGSRLKIGIVGFGNFGQFLGKTMVKQGHTVLAYSRSDYTDEAAKLGVSYFSDLDDLFEEHPEVIILCTSILSTEKVLESLPFQRLKRSTLFVDVLSVKEFPRNLFLQTLPQDFDILCTHPMFGPESGKNGWNNLAFVFDKVRIGMDDRRKSRCNSFLDIFAREGCRMVEMSCAEHDWHAAGSQFITHTVGRLLEKLSLESTPIDTKGYETLLKLVENTAGDSFDLYYGLFLYNPNAMEQLERFHVAFESLKTQLFGRLHSQHSHELAKSSSPKTTKLLTS.

Residues 1–18 (MAETLITKPPLSLSFTSL) constitute a chloroplast transit peptide. Prephenate/arogenate dehydrogenase domains are found at residues 53–334 (LRIA…GEND) and 365–640 (LKIG…LLTS).

It belongs to the prephenate/arogenate dehydrogenase family. In terms of tissue distribution, expressed in roots, stems, leaves, flowers, siliques and seeds. More abundant in seeds.

It localises to the plastid. The protein resides in the chloroplast. The catalysed reaction is L-arogenate + NADP(+) = L-tyrosine + CO2 + NADPH. Its pathway is amino-acid biosynthesis; L-tyrosine biosynthesis; L-tyrosine from L-arogenate (NADP(+) route): step 1/1. Functionally, involved in the biosynthesis of tyrosine. Has no prephenate dehydrogenase activity. The polypeptide is Arogenate dehydrogenase 1, chloroplastic (TYRAAT1) (Arabidopsis thaliana (Mouse-ear cress)).